A 257-amino-acid chain; its full sequence is Protein Cmaq_1209 (257 aa).

It belongs to the CinA family.

This chain is Protein Cmaq_1209, found in Caldivirga maquilingensis (strain ATCC 700844 / DSM 13496 / JCM 10307 / IC-167).